We begin with the raw amino-acid sequence, 372 residues long: Delta-type opioid receptor (372 aa).

At 1–47 (MELVPSARAELQSSPLVNLSDAFPSAFPSAGANASGSPGARSASSLA) the chain is on the extracellular side. N-linked (GlcNAc...) asparagine glycosylation is found at Asn-18 and Asn-33. The helical transmembrane segment at 48–75 (LAIAITALYSAVCAVGLLGNVLVMFGIV) threads the bilayer. At 76–85 (RYTKLKTATN) the chain is on the cytoplasmic side. The chain crosses the membrane as a helical span at residues 86–110 (IYIFNLALADALATSTLPFQSAKYL). The Extracellular portion of the chain corresponds to 111–122 (METWPFGELLCK). A disulfide bond links Cys-121 and Cys-198. A helical transmembrane segment spans residues 123–144 (AVLSIDYYNMFTSIFTLTMMSV). The Cytoplasmic portion of the chain corresponds to 145–163 (DRYIAVCHPVKALDFRTPA). A helical transmembrane segment spans residues 164 to 186 (KAKLINICIWVLASGVGVPIMVM). Topologically, residues 187–206 (AVTQPRDGAVVCMLQFPSPS) are extracellular. A helical membrane pass occupies residues 207-238 (WYWDTVTKICVFLFAFVVPILIITVCYGLMLL). Residues 239 to 261 (RLRSVRLLSGSKEKDRSLRRITR) lie on the Cytoplasmic side of the membrane. Residues 262–284 (MVLVVVGAFVVCWAPIHIFVIVW) form a helical membrane-spanning segment. Topologically, residues 285–299 (TLVDINRRDPLVVAA) are extracellular. Residues 300–321 (LHLCIALGYANSSLNPVLYAFL) traverse the membrane as a helical segment. Topologically, residues 322-372 (DENFKRCFRQLCRTPCGRQEPGSLRRPRQATTRERVTACTPSDGPGGGAAA) are cytoplasmic. Cys-333 is lipidated: S-palmitoyl cysteine. Positions 340–372 (QEPGSLRRPRQATTRERVTACTPSDGPGGGAAA) are disordered.

This sequence belongs to the G-protein coupled receptor 1 family. May form homooligomers. Forms a heterodimer with OPRM1. Interacts with GPRASP1. Interacts with RTP4; the interaction promotes cell surface localization of the OPRD1-OPRM1 heterodimer. Post-translationally, ubiquitinated. A basal ubiquitination seems not to be related to degradation. Ubiquitination is increased upon formation of OPRM1:OPRD1 oligomers leading to proteasomal degradation; the ubiquitination is diminished by RTP4. In terms of tissue distribution, brain, with high concentrations in the basal ganglia and limbic regions.

The protein localises to the cell membrane. In terms of biological role, G-protein coupled receptor that functions as a receptor for endogenous enkephalins and for a subset of other opioids. Ligand binding causes a conformation change that triggers signaling via guanine nucleotide-binding proteins (G proteins) and modulates the activity of down-stream effectors, such as adenylate cyclase. Signaling leads to the inhibition of adenylate cyclase activity. Inhibits neurotransmitter release by reducing calcium ion currents and increasing potassium ion conductance. Plays a role in the perception of pain and in opiate-mediated analgesia. Plays a role in developing analgesic tolerance to morphine. The polypeptide is Delta-type opioid receptor (Oprd1) (Mus musculus (Mouse)).